Consider the following 481-residue polypeptide: Ribulose bisphosphate carboxylase large chain (481 aa).

A propeptide spanning residues 1–2 (MS) is cleaved from the precursor. Proline 3 bears the N-acetylproline mark. Residue lysine 14 is modified to N6,N6,N6-trimethyllysine. Positions 123 and 173 each coordinate substrate. Lysine 175 acts as the Proton acceptor in catalysis. Lysine 177 contributes to the substrate binding site. Mg(2+)-binding residues include lysine 201, aspartate 203, and glutamate 204. Lysine 201 bears the N6-carboxylysine mark. The active-site Proton acceptor is histidine 294. 3 residues coordinate substrate: arginine 295, histidine 327, and serine 379.

It belongs to the RuBisCO large chain family. Type I subfamily. Heterohexadecamer of 8 large chains and 8 small chains; disulfide-linked. The disulfide link is formed within the large subunit homodimers. Requires Mg(2+) as cofactor. The disulfide bond which can form in the large chain dimeric partners within the hexadecamer appears to be associated with oxidative stress and protein turnover.

The protein resides in the plastid. The catalysed reaction is 2 (2R)-3-phosphoglycerate + 2 H(+) = D-ribulose 1,5-bisphosphate + CO2 + H2O. It catalyses the reaction D-ribulose 1,5-bisphosphate + O2 = 2-phosphoglycolate + (2R)-3-phosphoglycerate + 2 H(+). RuBisCO catalyzes two reactions: the carboxylation of D-ribulose 1,5-bisphosphate, the primary event in carbon dioxide fixation, as well as the oxidative fragmentation of the pentose substrate in the photorespiration process. Both reactions occur simultaneously and in competition at the same active site. This chain is Ribulose bisphosphate carboxylase large chain, found in Cuscuta sandwichiana (Kauna'oa).